Here is a 494-residue protein sequence, read N- to C-terminus: Lysine--tRNA ligase (494 aa).

Mg(2+) is bound by residues Glu-407 and Glu-414.

It belongs to the class-II aminoacyl-tRNA synthetase family. As to quaternary structure, homodimer. Requires Mg(2+) as cofactor.

It localises to the cytoplasm. The catalysed reaction is tRNA(Lys) + L-lysine + ATP = L-lysyl-tRNA(Lys) + AMP + diphosphate. The protein is Lysine--tRNA ligase of Lactococcus lactis subsp. lactis (strain IL1403) (Streptococcus lactis).